A 1817-amino-acid chain; its full sequence is Nuclear pore complex protein Nup98-Nup96 (1817 aa).

Positions 1 to 156 (MFNKSFGTPF…LFGPSSFTAA (156 aa)) are FG repeats 1. The tract at residues 157-213 (PTGTTIKFNPPTGTDTMVKAGVSTNISTKHQCITAMKEYESKSLEELRLEDYQANRK) is GLEBS; interaction with RAE1. Positions 214-480 (GPQNQVGAGT…NTTTATLGFG (267 aa)) are FG repeats 2. Residues 512 to 535 (PFGDSPLFRNPMSDPKKKEERLKP) are disordered. Position 524 is a phosphoserine (Ser524). Over residues 525-534 (DPKKKEERLK) the composition is skewed to basic and acidic residues. A Glycyl lysine isopeptide (Lys-Gly) (interchain with G-Cter in SUMO2) cross-link involves residue Lys563. An N6-acetyllysine; alternate modification is found at Lys603. A Glycyl lysine isopeptide (Lys-Gly) (interchain with G-Cter in SUMO2); alternate cross-link involves residue Lys603. Phosphoserine is present on residues Ser608, Ser612, Ser618, Ser623, Ser625, and Ser653. The tract at residues 614–633 (VNRDSENLASPSEYPENGER) is disordered. Residues 662–682 (PIAKPIPQTPESAGNKHSNSN) form a disordered region. Residue Lys665 forms a Glycyl lysine isopeptide (Lys-Gly) (interchain with G-Cter in SUMO2) linkage. Phosphothreonine is present on Thr670. Over residues 670 to 682 (TPESAGNKHSNSN) the composition is skewed to polar residues. Ser673, Ser681, Ser683, and Ser839 each carry phosphoserine. Positions 738–880 (KVGYYTIPSM…GSWVFKVSHF (143 aa)) constitute a Peptidase S59 domain. The active-site Nucleophile is the Ser881. Residues 886–937 (QDSDEEEEEHPSKTSTKKLKTAPLPPASQTTPLQMALNGKPAPPPQSQSPEV) are disordered. Ser888, Ser897, and Ser934 each carry phosphoserine. Residue Thr1000 is modified to Phosphothreonine. Residues Ser1023, Ser1028, Ser1043, Ser1060, and Ser1064 each carry the phosphoserine modification. A Phosphothreonine modification is found at Thr1070. Position 1329 is a phosphoserine (Ser1329). Thr1772 is modified (phosphothreonine).

Belongs to the nucleoporin GLFG family. Part of the nuclear pore complex (NPC). Interacts directly with NUP96. Part of the Nup160 subcomplex in the nuclear pore which is composed of NUP160, NUP133, NUP107 and NUP96; this complex plays a role in RNA export and in tethering NUP98 and NUP153 to the nucleus. Interacts with RAE1. Does not interact with TPR. Interacts with NUP88. Interacts directly with NUP88 and NUP214, subunits of the cytoplasmic filaments of the NPC. Interacts (via N-terminus) with DHX9 (via DRBM, OB-fold and RGG domains); this interaction occurs in a RNA-dependent manner and stimulates DHX9-mediated ATPase activity. In terms of assembly, (Microbial infection) Interacts with HIV-1 capsid protein P24 and nucleocapsid protein P7 (in vitro); the interaction may promote the integration of the virus in the host nucleus (in vitro). As to quaternary structure, (Microbial infection) Interacts with vesicular stomatitis virus protein M. (Microbial infection) Interacts with SARS coronavirus-2/SARS-CoV-2 ORF6 protein; the interaction blocks STAT1 nuclear translocation, antagonizes interferon signaling and blocks mRNA nuclear export (ex vivo). In terms of assembly, (Microbial infection) Interacts with SARS coronavirus/SARS-CoV ORF6 protein. Isoform 1 to isoform 4 are autoproteolytically cleaved to yield Nup98 and Nup96 or Nup98 only, respectively. Cleaved Nup98 is necessary for the targeting of Nup98 to the nuclear pore and the interaction with Nup96. Post-translationally, proteolytically degraded after poliovirus (PV) infection; degradation is partial and NCP- and TPR-binding domains withstand degradation.

It is found in the nucleus membrane. It localises to the nucleus. The protein resides in the nuclear pore complex. Its subcellular location is the nucleoplasm. Plays a role in the nuclear pore complex (NPC) assembly and/or maintenance. NUP98 and NUP96 are involved in the bidirectional transport across the NPC. May anchor NUP153 and TPR to the NPC. In cooperation with DHX9, plays a role in transcription and alternative splicing activation of a subset of genes. Involved in the localization of DHX9 in discrete intranuclear foci (GLFG-body). Its function is as follows. (Microbial infection) Interacts with HIV-1 capsid protein P24 and nucleocapsid protein P7 and may thereby promote the integration of the virus in the host nucleus (in vitro). Binding affinity to HIV-1 CA-NC complexes bearing the capsid change Asn-74-Asp is reduced (in vitro). This chain is Nuclear pore complex protein Nup98-Nup96, found in Homo sapiens (Human).